The following is a 211-amino-acid chain: Superoxide dismutase [Mn] (211 aa).

Mn(2+)-binding residues include histidine 27, histidine 82, aspartate 165, and histidine 169.

Belongs to the iron/manganese superoxide dismutase family. Homodimer. Mn(2+) serves as cofactor.

It catalyses the reaction 2 superoxide + 2 H(+) = H2O2 + O2. Destroys superoxide anion radicals which are normally produced within the cells and which are toxic to biological systems. This chain is Superoxide dismutase [Mn] (sodA), found in Bordetella pertussis (strain Tohama I / ATCC BAA-589 / NCTC 13251).